A 761-amino-acid chain; its full sequence is Phosphoribosylformylglycinamidine synthase subunit PurL (761 aa).

His-58 is an active-site residue. Tyr-61 and Lys-105 together coordinate ATP. Glu-107 provides a ligand contact to Mg(2+). Substrate is bound by residues 108–111 (SHNH) and Arg-130. The Proton acceptor role is filled by His-109. Mg(2+) is bound at residue Asp-131. Gln-259 serves as a coordination point for substrate. Residue Asp-287 coordinates Mg(2+). 331-333 (ESQ) is a binding site for substrate. Residues Asn-519 and Gly-556 each coordinate ATP. Mg(2+) is bound at residue Asn-557. A substrate-binding site is contributed by Ser-559.

It belongs to the FGAMS family. In terms of assembly, monomer. Part of the FGAM synthase complex composed of 1 PurL, 1 PurQ and 2 PurS subunits.

It localises to the cytoplasm. The catalysed reaction is N(2)-formyl-N(1)-(5-phospho-beta-D-ribosyl)glycinamide + L-glutamine + ATP + H2O = 2-formamido-N(1)-(5-O-phospho-beta-D-ribosyl)acetamidine + L-glutamate + ADP + phosphate + H(+). Its pathway is purine metabolism; IMP biosynthesis via de novo pathway; 5-amino-1-(5-phospho-D-ribosyl)imidazole from N(2)-formyl-N(1)-(5-phospho-D-ribosyl)glycinamide: step 1/2. Its function is as follows. Part of the phosphoribosylformylglycinamidine synthase complex involved in the purines biosynthetic pathway. Catalyzes the ATP-dependent conversion of formylglycinamide ribonucleotide (FGAR) and glutamine to yield formylglycinamidine ribonucleotide (FGAM) and glutamate. The FGAM synthase complex is composed of three subunits. PurQ produces an ammonia molecule by converting glutamine to glutamate. PurL transfers the ammonia molecule to FGAR to form FGAM in an ATP-dependent manner. PurS interacts with PurQ and PurL and is thought to assist in the transfer of the ammonia molecule from PurQ to PurL. In Rhodococcus opacus (strain B4), this protein is Phosphoribosylformylglycinamidine synthase subunit PurL.